Reading from the N-terminus, the 404-residue chain is Cysteine desulfurase IscS (404 aa).

Pyridoxal 5'-phosphate is bound by residues 75–76 (AT), Asn-155, Gln-183, and 203–205 (SAH). Residue Lys-206 is modified to N6-(pyridoxal phosphate)lysine. Pyridoxal 5'-phosphate is bound at residue Thr-243. Cys-328 (cysteine persulfide intermediate) is an active-site residue. Residue Cys-328 participates in [2Fe-2S] cluster binding.

Belongs to the class-V pyridoxal-phosphate-dependent aminotransferase family. NifS/IscS subfamily. Homodimer. Forms a heterotetramer with IscU, interacts with other sulfur acceptors. Pyridoxal 5'-phosphate serves as cofactor.

The protein resides in the cytoplasm. It catalyses the reaction (sulfur carrier)-H + L-cysteine = (sulfur carrier)-SH + L-alanine. It functions in the pathway cofactor biosynthesis; iron-sulfur cluster biosynthesis. Functionally, master enzyme that delivers sulfur to a number of partners involved in Fe-S cluster assembly, tRNA modification or cofactor biosynthesis. Catalyzes the removal of elemental sulfur atoms from cysteine to produce alanine. Functions as a sulfur delivery protein for Fe-S cluster synthesis onto IscU, an Fe-S scaffold assembly protein, as well as other S acceptor proteins. The sequence is that of Cysteine desulfurase IscS from Ruthia magnifica subsp. Calyptogena magnifica.